A 501-amino-acid chain; its full sequence is Lysine--tRNA ligase (501 aa).

2 residues coordinate Mg(2+): Glu402 and Glu409.

This sequence belongs to the class-II aminoacyl-tRNA synthetase family. As to quaternary structure, homodimer. The cofactor is Mg(2+).

It localises to the cytoplasm. It catalyses the reaction tRNA(Lys) + L-lysine + ATP = L-lysyl-tRNA(Lys) + AMP + diphosphate. The polypeptide is Lysine--tRNA ligase (lysS) (Helicobacter pylori (strain ATCC 700392 / 26695) (Campylobacter pylori)).